The following is a 260-amino-acid chain: Tropinone reductase homolog At2g29330 (260 aa).

13–37 contacts NADP(+); sequence LVTGGASGIGHAIVEELAGFGAKIH. Ser146 contacts substrate. The Proton acceptor role is filled by Tyr159.

Belongs to the short-chain dehydrogenases/reductases (SDR) family. SDR65C subfamily.

Its function is as follows. Reductase active only on small flexible lipophilic carbonyls. No activity with cyclic monoterpenes, tropinone, nitrogen-containing tropinone analogs, tropine or pseudotropine as substrate. The sequence is that of Tropinone reductase homolog At2g29330 from Arabidopsis thaliana (Mouse-ear cress).